The sequence spans 309 residues: Phosphoserine phosphatase (309 aa).

Asp-97 functions as the Nucleophile in the catalytic mechanism. Mg(2+) is bound by residues Asp-97 and Asp-99. Asp-99 functions as the Proton donor in the catalytic mechanism. Residues Glu-106, Arg-142, 186 to 187 (SG), and Lys-232 contribute to the substrate site. Asp-255 contributes to the Mg(2+) binding site. Residue Asn-258 participates in substrate binding.

It belongs to the HAD-like hydrolase superfamily. SerB family. The cofactor is Mg(2+).

The catalysed reaction is O-phospho-L-serine + H2O = L-serine + phosphate. It carries out the reaction O-phospho-D-serine + H2O = D-serine + phosphate. Its pathway is amino-acid biosynthesis; L-serine biosynthesis; L-serine from 3-phospho-D-glycerate: step 3/3. This Saccharomyces cerevisiae (strain ATCC 204508 / S288c) (Baker's yeast) protein is Phosphoserine phosphatase (SER2).